Consider the following 258-residue polypeptide: Acetylglutamate kinase (258 aa).

Residues glycine 40 to glycine 41, arginine 62, and asparagine 158 each bind substrate.

The protein belongs to the acetylglutamate kinase family. ArgB subfamily.

The protein localises to the cytoplasm. It carries out the reaction N-acetyl-L-glutamate + ATP = N-acetyl-L-glutamyl 5-phosphate + ADP. It functions in the pathway amino-acid biosynthesis; L-arginine biosynthesis; N(2)-acetyl-L-ornithine from L-glutamate: step 2/4. Functionally, catalyzes the ATP-dependent phosphorylation of N-acetyl-L-glutamate. The chain is Acetylglutamate kinase from Azobacteroides pseudotrichonymphae genomovar. CFP2.